Reading from the N-terminus, the 359-residue chain is MAQQIQVDLGERSYPIYIGQSLMSDSETLSRYLLKKRILIVTNETVAPLYLKQVQDTMASFGEISSVILSDGEQFKDLTHLDSIFTALLQRNYGRDSVLVALGGGVIGDMTGFAAACYQRGIDFIQIPTTLLSQVDSSVGGKTAVNHPLGKNMIGAFYQPQIVIIDTECLQTLPAREFAAGMAEVIKYGIMWDADFFQWLENNVQALKSLDTQALVYAISRCCEIKADVVSQDETEQGVRALLNLGHTFGHAIEAEMGYGNWLHGEAVAAGTVLAAQTAKSLGLIDESIVCRIVQLLQAFDLPVKAPESMDFESFIQHMRRDKKVLGGQIRLVLPTAIGRAEVFSQVPESTLEQVICCA.

NAD(+)-binding positions include 71-76 (DGEQFK), 105-109 (GVIGD), 129-130 (TT), Lys142, Lys151, and 169-172 (CLQT). The Zn(2+) site is built by Glu184, His247, and His264.

This sequence belongs to the sugar phosphate cyclases superfamily. Dehydroquinate synthase family. The cofactor is NAD(+). Requires Co(2+) as cofactor. Zn(2+) serves as cofactor.

The protein localises to the cytoplasm. The enzyme catalyses 7-phospho-2-dehydro-3-deoxy-D-arabino-heptonate = 3-dehydroquinate + phosphate. It participates in metabolic intermediate biosynthesis; chorismate biosynthesis; chorismate from D-erythrose 4-phosphate and phosphoenolpyruvate: step 2/7. Its function is as follows. Catalyzes the conversion of 3-deoxy-D-arabino-heptulosonate 7-phosphate (DAHP) to dehydroquinate (DHQ). The sequence is that of 3-dehydroquinate synthase from Shewanella oneidensis (strain ATCC 700550 / JCM 31522 / CIP 106686 / LMG 19005 / NCIMB 14063 / MR-1).